Consider the following 427-residue polypeptide: Histidinol dehydrogenase (427 aa).

The NAD(+) site is built by Tyr127, Gln185, and Asn208. Residues Ser232, Gln254, and His257 each contribute to the substrate site. Zn(2+) contacts are provided by Gln254 and His257. Catalysis depends on proton acceptor residues Glu321 and His322. 4 residues coordinate substrate: His322, Asp355, Glu409, and His414. A Zn(2+)-binding site is contributed by Asp355. Position 414 (His414) interacts with Zn(2+).

The protein belongs to the histidinol dehydrogenase family. The cofactor is Zn(2+).

The enzyme catalyses L-histidinol + 2 NAD(+) + H2O = L-histidine + 2 NADH + 3 H(+). The protein operates within amino-acid biosynthesis; L-histidine biosynthesis; L-histidine from 5-phospho-alpha-D-ribose 1-diphosphate: step 9/9. Its function is as follows. Catalyzes the sequential NAD-dependent oxidations of L-histidinol to L-histidinaldehyde and then to L-histidine. This is Histidinol dehydrogenase from Haemophilus influenzae (strain 86-028NP).